Here is a 307-residue protein sequence, read N- to C-terminus: Stage III sporulation protein AA (307 aa).

143–150 (GPPQTGKT) provides a ligand contact to ATP.

This Bacillus subtilis (strain 168) protein is Stage III sporulation protein AA (spoIIIAA).